Consider the following 277-residue polypeptide: Membrane protein insertase YidC 2 (277 aa).

Positions 1–22 (MKKYRKILAMLAVLAIVLVLSG) are cleaved as a signal peptide. The N-palmitoyl cysteine moiety is linked to residue C23. A lipid anchor (S-diacylglycerol cysteine) is attached at C23. 5 helical membrane-spanning segments follow: residues 35–55 (FWDGLIILNFSRAIIWLSNLF), 60–80 (GLGIIVFTLIIRIIILPLMIF), 130–150 (ASMLPLLVQLPILIALYQAIW), 170–190 (PYYVLPILAAIFTFASSWLAM), and 208–228 (PVIILITAINVPSALSLYWVI). Residues 251 to 266 (EAKKQAERDRKRTLEK) are compositionally biased toward basic and acidic residues. The disordered stretch occupies residues 251–277 (EAKKQAERDRKRTLEKARKRAIRNHKR). Over residues 267–277 (ARKRAIRNHKR) the composition is skewed to basic residues.

It belongs to the OXA1/ALB3/YidC family. Type 2 subfamily.

The protein localises to the cell membrane. In terms of biological role, required for the insertion and/or proper folding and/or complex formation of integral membrane proteins into the membrane. Involved in integration of membrane proteins that insert both dependently and independently of the Sec translocase complex, as well as at least some lipoproteins. The chain is Membrane protein insertase YidC 2 from Lactiplantibacillus plantarum (strain ATCC BAA-793 / NCIMB 8826 / WCFS1) (Lactobacillus plantarum).